The chain runs to 863 residues: DNA replication licensing factor mcm4 (863 aa).

Positions 1 to 121 (MSSPTSTPSR…ARQRPDLGSA (121 aa)) are disordered. Composition is skewed to polar residues over residues 54 to 64 (SPSGDLQSPSG) and 78 to 99 (SALQ…SSRV). Residues 306-331 (CQVCAFTTRVEIDRGRISEPSVCKHC) form a C4-type zinc finger. The MCM domain occupies 458–667 (IYERLASALA…YDRRLAHHLV (210 aa)). ATP is bound by residues Y471, R497, K516, S517, N618, R643, R732, and E735. The short motif at 642–645 (SRFD) is the Arginine finger element.

The protein belongs to the MCM family. Component of the mcm2-7 complex (RLF-M). The complex forms a toroidal hexameric ring with the proposed subunit order mcm2-mcm6-mcm4-mcm7-mcm3-mcm5. The heterodimer of mmcm3/mcm5 interacts with mcm4, mmcm6, mcm7 and weakly with mcm2. Component of the CMG helicase complex, composed of the mcm2-7 complex, the GINS complex and cdc45. Post-translationally, hyperphosphorylated during mitosis in a mechanism requiring cdc2-cyclin B and other kinases. Undergoes dephosphorylation after exiting mitosis, existing in a partially phosphorylated state in the cytosolic interphase mcm complex which associates with the pre-replication complexes (pre-Rcs). Complete dephosphorylation inactivates the mcm complex, preventing its binding to chromatin. Becomes actively phosphorylated during S phase once the mcm complex is assembled on the chromatin. This chromatin-associated phosphorylation occurs during the activation of the pre-Rcs and is independent of cdks. Phosphorylated by the cdc7-dbf4b complex.

It is found in the nucleus. It localises to the chromosome. The enzyme catalyses ATP + H2O = ADP + phosphate + H(+). Functionally, acts as a component of the MCM2-7 complex (MCM complex) which is the replicative helicase essential for 'once per cell cycle' DNA replication initiation and elongation in eukaryotic cells. Core component of CDC45-MCM-GINS (CMG) helicase, the molecular machine that unwinds template DNA during replication, and around which the replisome is built. The active ATPase sites in the MCM2-7 ring are formed through the interaction surfaces of two neighboring subunits such that a critical structure of a conserved arginine finger motif is provided in trans relative to the ATP-binding site of the Walker A box of the adjacent subunit. The six ATPase active sites, however, are likely to contribute differentially to the complex helicase activity. The protein is DNA replication licensing factor mcm4 of Xenopus tropicalis (Western clawed frog).